Here is a 330-residue protein sequence, read N- to C-terminus: Methionyl-tRNA formyltransferase (330 aa).

Serine 116–proline 119 contacts (6S)-5,6,7,8-tetrahydrofolate.

The protein belongs to the Fmt family.

The enzyme catalyses L-methionyl-tRNA(fMet) + (6R)-10-formyltetrahydrofolate = N-formyl-L-methionyl-tRNA(fMet) + (6S)-5,6,7,8-tetrahydrofolate + H(+). Attaches a formyl group to the free amino group of methionyl-tRNA(fMet). The formyl group appears to play a dual role in the initiator identity of N-formylmethionyl-tRNA by promoting its recognition by IF2 and preventing the misappropriation of this tRNA by the elongation apparatus. This Nitratidesulfovibrio vulgaris (strain DP4) (Desulfovibrio vulgaris) protein is Methionyl-tRNA formyltransferase.